The following is a 1220-amino-acid chain: MAILNELYPSVPYNVLAYTPPSFLPDAGTQATPADLTAYEQLLKNLEKGINAGTYSKAIADVLKGIFIDDTINYQTYVNIGLSLITLAVPEIGIFTPFIGLFFAALNKHDAPPPPNAKDIFEAMKPAIQEMIDRTLTADEQTFLNGEISGLQNLAARYQSTMDDIQSHGGFNKVDSGLIKKFTDEVLSLNSFYTDRLPVFITDNTADRTLLGLPYYAILASMHLMLLRDIITKGPTWDSKINFTPDAIDSFKTDIKNNIKLYSKTIYDVFQKGLASYGTPSDLESFAKKKKYIEIMTTHCLDFARLFPTFDPDLYPTGSGDISLQKTRRILSPFIPIRTADGLTLNNTSIDTSNWPNYENGNGAFPNPKERILKQFKLYPSWRAGQYGGLLQPYLWAIEVQDSVETRLYGQLPAVDPQAGPNYVSIDSSNPIIQINMDTWKTPPQGASGWNTNLMRGSVSGLSFLQRDGTRLSAGMGGGFADTIYSLPATHYLSYLYGTPYQTSDNYSGHVGALVGVSTPQEATLPNIIGQPDEQGNVSTMGFPFEKASYGGTVVKEWLNGANAMKLSPGQSIGIPITNVTKHNYQVRCRYASNSDNPVFFNVDTGGANPIFQQINFASTVDSNMGVKEENGVYVVKSIKTVEIPAGSFYVHVTNQGSSDLFLDRIEFVPKIQFQFCDNNNLHCDCNNPVDTDCTFCCVCTSLTDCDCNNPRGIDCTLCCQVENQLPSFVTLTDLRNITSQVNGLFAPGTQNRLAQNISDHDIEEVVLKVDALSDEIFGTNKKALRKLVNQAKRLSRARNLLIGGSFENWDAWYKGRNVVTVSDHELFKSDHVLLPPPGLSPSYIFQKVEESKLKANTRYTVSGFIAHATDLEIVVSRYGQEIKKVVQVPYGEAFPLTSSGPVCCIPHSTSNGTLGNPHFFSYSIDVGALDVDTNPGIEFGLRIVNPTGMARVSNLEIREDRPLAANEIRQVQRVARNWRTEYEKERAEVTSLIQPVINRINGLYENENWNGSIRSDISYQNIDAIVLPTLPTLRHWFMSDRFSEQGDIMAKFQGALNRAYAQLEQSTLLHNGHFTKDAANWTIEGDAHQITLEDGRRVLRLPDWSSSVSQMIEIENFNPDKEYNLVFHGQGEGTVTLEHGEETKYIETHTHHFANFTTSQRQGLTFESNKVTVTISSEDGEFLVDNIALVEAPLPTDDQNSEGNTAFSTNSDTSMNNNQ.

Residues 1194–1220 (PLPTDDQNSEGNTAFSTNSDTSMNNNQ) are disordered. Residues 1198–1220 (DDQNSEGNTAFSTNSDTSMNNNQ) show a composition bias toward polar residues.

It belongs to the delta endotoxin family.

In terms of biological role, promotes colloidosmotic lysis by binding to the midgut epithelial cells of hymenopteran species. The protein is Pesticidal crystal protein Cry5Ac (cry5Ac) of Bacillus thuringiensis.